Reading from the N-terminus, the 220-residue chain is Small ribosomal subunit protein eS1 (220 aa).

The protein belongs to the eukaryotic ribosomal protein eS1 family.

This Pyrobaculum arsenaticum (strain DSM 13514 / JCM 11321 / PZ6) protein is Small ribosomal subunit protein eS1.